A 508-amino-acid polypeptide reads, in one-letter code: Hydroxymethylglutaryl-CoA synthase, mitochondrial (508 aa).

The transit peptide at 1 to 37 directs the protein to the mitochondrion; that stretch reads MQRLLTPVRQVLQVKRVMQEASLLPARLLPAAHPSFS. At Lys52 the chain carries N6-succinyllysine. Positions 80 and 81 each coordinate (3S)-3-hydroxy-3-methylglutaryl-CoA. Catalysis depends on Glu132, which acts as the Proton donor/acceptor. 3 residues coordinate (3S)-3-hydroxy-3-methylglutaryl-CoA: Cys166, Asn204, and Thr208. Cys166 serves as the catalytic Acyl-thioester intermediate. Lys243 is subject to N6-acetyllysine. N6-acetyllysine; alternate is present on Lys256. An N6-succinyllysine; alternate modification is found at Lys256. (3S)-3-hydroxy-3-methylglutaryl-CoA is bound by residues Ser258 and His301. Residue His301 is the Proton donor/acceptor of the active site. At Lys306 the chain carries N6-acetyllysine. Residue Lys310 participates in (3S)-3-hydroxy-3-methylglutaryl-CoA binding. Lys310 carries the N6-acetyllysine; alternate modification. Lys310 is modified (N6-succinyllysine; alternate). Lys333 is modified (N6-succinyllysine). Residues Lys342, Lys350, Lys354, and Lys358 each carry the N6-acetyllysine; alternate modification. Residues Lys342, Lys350, Lys354, and Lys358 each carry the N6-succinyllysine; alternate modification. Residues Asn380 and Ser414 each contribute to the (3S)-3-hydroxy-3-methylglutaryl-CoA site. A Phosphoserine modification is found at Ser433. Lys437 carries the post-translational modification N6-acetyllysine. Ser440 bears the Phosphoserine mark. Position 447 is an N6-acetyllysine; alternate (Lys447). Position 447 is an N6-succinyllysine; alternate (Lys447). Phosphoserine is present on Ser456. Residue Lys473 is modified to N6-acetyllysine; alternate. The residue at position 473 (Lys473) is an N6-succinyllysine; alternate. Ser477 bears the Phosphoserine mark.

The protein belongs to the thiolase-like superfamily. HMG-CoA synthase family. Homodimer. Post-translationally, succinylated. Desuccinylated by SIRT5. Succinylation, at least at Lys-310, inhibits the enzymatic activity.

It localises to the mitochondrion. The catalysed reaction is acetoacetyl-CoA + acetyl-CoA + H2O = (3S)-3-hydroxy-3-methylglutaryl-CoA + CoA + H(+). It participates in metabolic intermediate biosynthesis; (R)-mevalonate biosynthesis; (R)-mevalonate from acetyl-CoA: step 2/3. Its function is as follows. Catalyzes the first irreversible step in ketogenesis, condensing acetyl-CoA to acetoacetyl-CoA to form HMG-CoA, which is converted by HMG-CoA reductase (HMGCR) into mevalonate. The protein is Hydroxymethylglutaryl-CoA synthase, mitochondrial (HMGCS2) of Bos taurus (Bovine).